The primary structure comprises 1836 residues: Sodium channel protein type 4 subunit alpha (1836 aa).

Residues 1 to 131 (MARPSLCTLV…RGAIKVLIHA (131 aa)) lie on the Cytoplasmic side of the membrane. Residues 39-60 (LQRNKQMEIEEPERKPRSDLEA) are compositionally biased toward basic and acidic residues. The segment at 39-63 (LQRNKQMEIEEPERKPRSDLEAGKN) is disordered. Residues 113–454 (LLSPFSVVRR…VVAMAYAEQN (342 aa)) form an I repeat. A helical transmembrane segment spans residues 132–150 (LFSMFIMITILTNCVFMTM). Residues 151 to 157 (SDPPPWS) are Extracellular-facing. A helical membrane pass occupies residues 158–178 (KNVEYTFTGIYTFESLIKILA). The Cytoplasmic segment spans residues 179-192 (RGFCVDDFTFLRDP). Residues 193-210 (WNWLDFSVIMMAYLTEFV) traverse the membrane as a helical segment. The Extracellular portion of the chain corresponds to 211 to 216 (DLGNIS). The N-linked (GlcNAc...) asparagine glycan is linked to N214. Residues 217–233 (ALRTFRVLRALKTITVI) form a helical membrane-spanning segment. Over 234-252 (PGLKTIVGALIQSVKKLSD) the chain is Cytoplasmic. The chain crosses the membrane as a helical span at residues 253–272 (VMILTVFCLSVFALVGLQLF). The Extracellular portion of the chain corresponds to 273-391 (MGNLRQKCVR…PNYGYTSYDT (119 aa)). The cysteines at positions 280 and 360 are disulfide-linked. N-linked (GlcNAc...) asparagine glycosylation is found at N288, N291, N297, N303, N315, N321, N333, and N362. A disulfide bridge connects residues C369 and C375. The segment at residues 392–416 (FSWAFLALFRLMTQDYWENLFQLTL) is an intramembrane region (pore-forming). Residues 417–423 (RAAGKTY) lie on the Extracellular side of the membrane. Residues 424 to 444 (MIFFVVIIFLGSFYLINLILA) form a helical membrane-spanning segment. Over 445–578 (VVAMAYAEQN…NIIHLIVMDP (134 aa)) the chain is Cytoplasmic. The disordered stretch occupies residues 493–530 (GGEADGDPAHGKDCNGSLDTSQGEKGAPRQSSSGDSGI). Polar residues predominate over residues 509 to 528 (SLDTSQGEKGAPRQSSSGDS). An II repeat occupies 560-832 (CCAPWLKFKN…QIAIGRIKLG (273 aa)). The helical transmembrane segment at 579 to 597 (FVDLGITICIVLNTLFMAM) threads the bilayer. Over 598 to 608 (EHYPMTEHFDN) the chain is Extracellular. Residues 609 to 628 (VLTVGNLVFTGIFTAEMVLK) traverse the membrane as a helical segment. At 629 to 642 (LIAMDPYEYFQQGW) the chain is on the cytoplasmic side. Residues 643-662 (NIFDSIIVTLSLVELGLANV) form a helical membrane-spanning segment. The Extracellular portion of the chain corresponds to 663–664 (QG). A helical transmembrane segment spans residues 665-682 (LSVLRSFRLLRVFKLAKS). The Cytoplasmic portion of the chain corresponds to 683-698 (WPTLNMLIKIIGNSVG). Residues 699-717 (ALGNLTLVLAIIVFIFAVV) traverse the membrane as a helical segment. Residues 718-746 (GMQLFGKSYKECVCKIALDCNLPRWHMHD) lie on the Extracellular side of the membrane. The cysteines at positions 731 and 737 are disulfide-linked. Residues 747-767 (FFHSFLIVFRILCGEWIETMW) constitute an intramembrane region (pore-forming). Topologically, residues 768 to 778 (DCMEVAGQAMC) are extracellular. Cysteines 769 and 778 form a disulfide. Residues 779-797 (LTVFLMVMVIGNLVVLNLF) traverse the membrane as a helical segment. Residues 798-1032 (LALLLSSFSA…ACFKIVEHNW (235 aa)) are Cytoplasmic-facing. Disordered stretches follow at residues 863 to 885 (GAGE…PPEE) and 930 to 992 (ESDL…QPEE). Basic and acidic residues predominate over residues 876–885 (EDEKKEPPEE). Acidic residues-rich tracts occupy residues 930-947 (ESDL…FSEP) and 975-992 (EDPE…QPEE). An III repeat occupies 1013–1326 (RGKKWWTLRR…KKYYNAMKKL (314 aa)). The chain crosses the membrane as a helical span at residues 1033-1050 (FETFIVFMILLSSGALAF). The Extracellular segment spans residues 1051–1063 (EDIYIEQRRVIRT). Residues 1064–1082 (ILEYADKVFTYIFIMEMLL) form a helical membrane-spanning segment. The Cytoplasmic segment spans residues 1083 to 1096 (KWVAYGFKVYFTNA). The helical transmembrane segment at 1097–1115 (WCWLDFLIVDVSIISLVAN) threads the bilayer. The Extracellular segment spans residues 1116–1123 (WLGYSELG). Residues 1124 to 1142 (PIKSLRTLRALRPLRALSR) traverse the membrane as a helical segment. Topologically, residues 1143–1159 (FEGMRVVVNALLGAIPS) are cytoplasmic. The chain crosses the membrane as a helical span at residues 1160–1179 (IMNVLLVCLIFWLIFSIMGV). The Extracellular portion of the chain corresponds to 1180 to 1230 (NLFAGKFYYCINTTTSERFDISEVNNKSECESLMHTGQVRWLNVKVNYDNV). C1189 and C1209 are joined by a disulfide. N1191 and N1205 each carry an N-linked (GlcNAc...) asparagine glycan. The pore-forming intramembrane region spans 1231 to 1252 (GLGYLSLLQVATFKGWMDIMYA). Residues 1253-1269 (AVDSREKEEQPQYEVNL) lie on the Extracellular side of the membrane. A helical membrane pass occupies residues 1270 to 1291 (YMYLYFVIFIIFGSFFTLNLFI). Residues 1292–1354 (GVIIDNFNQQ…MVYDLVTKQA (63 aa)) are Cytoplasmic-facing. Residues 1310–1312 (IFM) are important for rapid channel inactivation. The IV repeat unit spans residues 1335 to 1633 (IPRPQNKIQG…WEKFDPDATQ (299 aa)). A helical transmembrane segment spans residues 1355-1372 (FDITIMILICLNMVTMMV). Topologically, residues 1373-1383 (ETDNQSQLKVD) are extracellular. The chain crosses the membrane as a helical span at residues 1384-1402 (ILYNINMIFIIIFTGECVL). Over 1403-1414 (KMLALRQYYFTV) the chain is Cytoplasmic. Residues 1415-1432 (GWNIFDFVVVILSIVGLA) traverse the membrane as a helical segment. The Extracellular segment spans residues 1433 to 1445 (LSDLIQKYFVSPT). A helical membrane pass occupies residues 1446–1462 (LFRVIRLARIGRVLRLI). Over 1463 to 1481 (RGAKGIRTLLFALMMSLPA) the chain is Cytoplasmic. The helical transmembrane segment at 1482-1499 (LFNIGLLLFLVMFIYSIF) threads the bilayer. Residues 1500–1521 (GMSNFAYVKKESGIDDMFNFET) are Extracellular-facing. The pore-forming intramembrane region spans 1522 to 1544 (FGNSIICLFEITTSAGWDGLLNP). Topologically, residues 1545–1574 (ILNSGPPDCDPNLENPGTSVKGDCGNPSIG) are extracellular. C1553 and C1568 form a disulfide bridge. A helical membrane pass occupies residues 1575-1597 (ICFFCSYIIISFLIVVNMYIAII). At 1598 to 1836 (LENFNVATEE…VRPGVKESLV (239 aa)) the chain is on the cytoplasmic side. Positions 1727 to 1756 (EEVCAIKIQRAYRRHLLQRSMKQASYMYRH) constitute an IQ domain. Residues 1778-1836 (KMYGHENGNSSSPSPEEKGEAGDAGPTMGLMPISPSDTAWPPAPPPGQTVRPGVKESLV) are disordered.

Belongs to the sodium channel (TC 1.A.1.10) family. Nav1.4/SCN4A subfamily. As to quaternary structure, the Nav1.4 voltage-gated sodium channel consists of an ion-conducting alpha subunit SCN4A which is functional on its own and a regulatory beta subunit SCN1B. SCN1B strongly enhances the presence of SCN4A at the cell surface. SCN1B is also required for rapid channel inactivation and recovery after inactivation. It prevents the decrease of channel activity in response to repetitive, high-frequency depolarizations. Interacts with the syntrophins SNTA1, SNTB1 and SNTB2 (via PDZ domain); probably links SCN4A to the actin cytoskeleton and the extracellular matrix via the dystrophin-associated protein complex and regulates its localization in muscle cells. Interacts with TMEM233; probable regulator of the channel.

The protein resides in the cell membrane. It catalyses the reaction Na(+)(in) = Na(+)(out). With respect to regulation, the channel is inhibited by tetrodotoxin and saxitoxin. Inhibited by the conotoxin GVIIJ. Functionally, pore-forming subunit of Nav1.4, a voltage-gated sodium (Nav) channel that directly mediates the depolarizing phase of action potentials in excitable membranes. Navs, also called VGSCs (voltage-gated sodium channels) or VDSCs (voltage-dependent sodium channels), operate by switching between closed and open conformations depending on the voltage difference across the membrane. In the open conformation they allow Na(+) ions to selectively pass through the pore, along their electrochemical gradient. The influx of Na+ ions provokes membrane depolarization, initiating the propagation of electrical signals throughout cells and tissues. Highly expressed in skeletal muscles, Nav1.4 generates the action potential crucial for muscle contraction. This is Sodium channel protein type 4 subunit alpha from Homo sapiens (Human).